A 542-amino-acid polypeptide reads, in one-letter code: Peptide chain release factor 3 (542 aa).

In terms of domain architecture, tr-type G spans 14–283 (ELRRNFAIIS…YFLEYALKPG (270 aa)). Residues 23 to 30 (SHPDAGKT), 91 to 95 (DTPGH), and 145 to 148 (NKLD) contribute to the GTP site.

Belongs to the TRAFAC class translation factor GTPase superfamily. Classic translation factor GTPase family. PrfC subfamily.

Its subcellular location is the cytoplasm. Its function is as follows. Increases the formation of ribosomal termination complexes and stimulates activities of RF-1 and RF-2. It binds guanine nucleotides and has strong preference for UGA stop codons. It may interact directly with the ribosome. The stimulation of RF-1 and RF-2 is significantly reduced by GTP and GDP, but not by GMP. In Nostoc punctiforme (strain ATCC 29133 / PCC 73102), this protein is Peptide chain release factor 3.